The chain runs to 479 residues: Adenosylhomocysteinase (479 aa).

Positions 65, 144, and 204 each coordinate substrate. NAD(+) is bound at residue 205–207; sequence TTT. Substrate contacts are provided by Lys234 and Asp238. Residues Asn239, 268–273, Glu291, Asn326, 347–349, and Asn392 contribute to the NAD(+) site; these read GYGDVG and IGH.

The protein belongs to the adenosylhomocysteinase family. NAD(+) is required as a cofactor.

Its subcellular location is the cytoplasm. It catalyses the reaction S-adenosyl-L-homocysteine + H2O = L-homocysteine + adenosine. It participates in amino-acid biosynthesis; L-homocysteine biosynthesis; L-homocysteine from S-adenosyl-L-homocysteine: step 1/1. Functionally, may play a key role in the regulation of the intracellular concentration of adenosylhomocysteine. This is Adenosylhomocysteinase from Variovorax paradoxus (strain S110).